Here is a 292-residue protein sequence, read N- to C-terminus: uncharacterized protein (292 aa).

Positions 1–19 are cleaved as a signal peptide; it reads MFKKYIFILLLLVTSIVKA. The disordered stretch occupies residues 271–292; that stretch reads KRNNPPLKTNNAKSKNPYDQSK.

This is an uncharacterized protein from Rickettsia bellii (strain RML369-C).